The following is a 248-amino-acid chain: Mannose-binding protein C (248 aa).

The signal sequence occupies residues 1-20 (MSPFLSLPLLLLSVLSASYS). The interval 36-112 (IACSSPGING…GDSSLAASER (77 aa)) is disordered. The Collagen-like domain occupies 42 to 99 (GINGFPGKDGRDGTKGEKGEPGQGLRGLQGPPGKLGPPGNPGPSGSPGAKGQKGDPGA). 4-hydroxyproline is present on Pro47. Residues 49 to 61 (KDGRDGTKGEKGE) show a composition bias toward basic and acidic residues. A 4-hydroxyproline mark is found at Pro73, Pro79, Pro82, and Pro88. The stretch at 112–130 (RKALQTEMARIKKWVTFSL) forms a coiled coil. Residues 134–245 (VGKKLFLSNG…CSSSHLAICE (112 aa)) form the C-type lectin domain. 2 cysteine pairs are disulfide-bonded: Cys155-Cys244 and Cys222-Cys236.

In terms of assembly, oligomeric complex of 3 or more homotrimers. Interacts with MASP1 and MASP2. Interacts with MEP1A and MEP1B and may inhibit their catalytic activity. Hydroxylation on proline residues within the sequence motif, GXPG, is most likely to be 4-hydroxy as this fits the requirement for 4-hydroxylation in vertebrates.

The protein resides in the secreted. Functionally, calcium-dependent lectin involved in innate immune defense. Binds mannose, fucose and N-acetylglucosamine on different microorganisms and activates the lectin complement pathway. Binds to late apoptotic cells, as well as to apoptotic blebs and to necrotic cells, but not to early apoptotic cells, facilitating their uptake by macrophages. The protein is Mannose-binding protein C (MBL2) of Saguinus oedipus (Cotton-top tamarin).